A 389-amino-acid polypeptide reads, in one-letter code: Brix domain-containing protein C1B9.03c (389 aa).

Residues 28-309 (SMVIRSGASE…LIKITEDAMG (282 aa)) form the Brix domain. A compositionally biased stretch (basic and acidic residues) spans 323–350 (EEIKQQDNFHEQSRALKEKRKKEQDENV). The segment at 323–389 (EEIKQQDNFH…EGSSAYSDTE (67 aa)) is disordered. Basic residues predominate over residues 351 to 362 (RRKRENKKRRKD). Serine 377 is modified (phosphoserine). Residues 379 to 389 (NEGSSAYSDTE) show a composition bias toward polar residues.

This is Brix domain-containing protein C1B9.03c from Schizosaccharomyces pombe (strain 972 / ATCC 24843) (Fission yeast).